Here is a 201-residue protein sequence, read N- to C-terminus: FMN-dependent NADH:quinone oxidoreductase (201 aa).

FMN contacts are provided by residues S10, 16-18 (SQS), 96-99 (MYNF), and 140-143 (SRGG).

Belongs to the azoreductase type 1 family. Homodimer. Requires FMN as cofactor.

The catalysed reaction is 2 a quinone + NADH + H(+) = 2 a 1,4-benzosemiquinone + NAD(+). The enzyme catalyses N,N-dimethyl-1,4-phenylenediamine + anthranilate + 2 NAD(+) = 2-(4-dimethylaminophenyl)diazenylbenzoate + 2 NADH + 2 H(+). Functionally, quinone reductase that provides resistance to thiol-specific stress caused by electrophilic quinones. Also exhibits azoreductase activity. Catalyzes the reductive cleavage of the azo bond in aromatic azo compounds to the corresponding amines. This Escherichia coli O6:K15:H31 (strain 536 / UPEC) protein is FMN-dependent NADH:quinone oxidoreductase.